A 116-amino-acid polypeptide reads, in one-letter code: Protein Rev (116 aa).

A phosphoserine; by host CK2 mark is found at Ser5 and Ser8. The interval 18–26 (LIKFLYQSN) is homomultimerization. The segment at 25–49 (SNPPPSLEGTRQARRNRRRRWRERQ) is disordered. Residues 34 to 50 (TRQARRNRRRRWRERQR) carry the Nuclear localization signal and RNA-binding (RRE) motif. A compositionally biased stretch (basic residues) spans 36–47 (QARRNRRRRWRE). A Nuclear export signal and binding to XPO1 motif is present at residues 73 to 84 (LPLPPLEKLTLD). Residues Ser92 and Ser99 each carry the phosphoserine; by host modification. The tract at residues 92–116 (SGTQGVGSPQILVESPAILEPGTKE) is disordered.

It belongs to the HIV-1 REV protein family. As to quaternary structure, homomultimer; when bound to the RRE. Multimeric assembly is essential for activity and may involve XPO1. Binds to human KPNB1, XPO1, TNPO1, RANBP5 and IPO7. Interacts with the viral Integrase. Interacts with human KHDRBS1. Interacts with human NAP1; this interaction decreases Rev multimerization and stimulates its activity. Interacts with human DEAD-box helicases DDX3 and DDX24; these interactions may serve for viral RNA export to the cytoplasm and packaging, respectively. Interacts with human PSIP1; this interaction may inhibit HIV-1 DNA integration by promoting dissociation of the Integrase-LEDGF/p75 complex. Asymmetrically arginine dimethylated at one site by host PRMT6. Methylation impairs the RNA-binding activity and export of viral RNA from the nucleus to the cytoplasm. Post-translationally, phosphorylated by protein kinase CK2. Presence of, and maybe binding to the N-terminus of the regulatory beta subunit of CK2 is necessary for CK2-mediated Rev's phosphorylation.

The protein localises to the host nucleus. It is found in the host nucleolus. The protein resides in the host cytoplasm. In terms of biological role, escorts unspliced or incompletely spliced viral pre-mRNAs (late transcripts) out of the nucleus of infected cells. These pre-mRNAs carry a recognition sequence called Rev responsive element (RRE) located in the env gene, that is not present in fully spliced viral mRNAs (early transcripts). This function is essential since most viral proteins are translated from unspliced or partially spliced pre-mRNAs which cannot exit the nucleus by the pathway used by fully processed cellular mRNAs. Rev itself is translated from a fully spliced mRNA that readily exits the nucleus. Rev's nuclear localization signal (NLS) binds directly to KPNB1/Importin beta-1 without previous binding to KPNA1/Importin alpha-1. KPNB1 binds to the GDP bound form of RAN (Ran-GDP) and targets Rev to the nucleus. In the nucleus, the conversion from Ran-GDP to Ran-GTP dissociates Rev from KPNB1 and allows Rev's binding to the RRE in viral pre-mRNAs. Rev multimerization on the RRE via cooperative assembly exposes its nuclear export signal (NES) to the surface. Rev can then form a complex with XPO1/CRM1 and Ran-GTP, leading to nuclear export of the complex. Conversion from Ran-GTP to Ran-GDP mediates dissociation of the Rev/RRE/XPO1/RAN complex, so that Rev can return to the nucleus for a subsequent round of export. Beside KPNB1, also seems to interact with TNPO1/Transportin-1, RANBP5/IPO5 and IPO7/RANBP7 for nuclear import. The nucleoporin-like HRB/RIP is an essential cofactor that probably indirectly interacts with Rev to release HIV RNAs from the perinuclear region to the cytoplasm. This Human immunodeficiency virus type 1 group M subtype B (strain 89.6) (HIV-1) protein is Protein Rev.